The chain runs to 704 residues: SH3KBP1-binding protein 1 (704 aa).

A2 is modified (N-acetylalanine). A BTB domain is found at 19 to 88; it reads EVIHLNVGGK…LRTKELDPRG (70 aa). Residues 146 to 165 are disordered; the sequence is VGPQQIGGRPAPVRRSNTMP. Position 163 is a phosphothreonine (T163). WD repeat units lie at residues 233–280, 283–322, 324–359, 428–466, and 548–586; these read RLDW…GGSE, VFHL…WQVQ, VQPI…LRMK, VHRS…GMIS, and LECE…DGLG. The segment at 609-704 is disordered; sequence PLASSRGSFP…LKKTLNETSF (96 aa). The span at 612-631 shows a compositional bias: low complexity; it reads SSRGSFPSPSPRTSLTSLHS. Residues 618 to 623 carry the PXXXPR motif; sequence PSPSPR. 2 positions are modified to phosphoserine: S644 and S646. Residues 678 to 683 carry the PXXXPR motif; that stretch reads PTPAPR. The residue at position 693 (T693) is a Phosphothreonine.

The protein belongs to the KCTD3 family. In terms of assembly, monomer. Interacts with CUL3; interaction is direct and forms a 5:5 heterodecamer. Interacts (via PXXXPR motifs) with SH3KBP1 (via SH3 domains). Directly interacts with cathepsin B/CTSB.

Its subcellular location is the lysosome. In terms of biological role, inhibits CBL-SH3KBP1 complex mediated down-regulation of EGFR signaling by sequestration of SH3KBP1. Binds to SH3KBP1 and prevents its interaction with CBL and inhibits translocation of SH3KBP1 to EGFR containing vesicles upon EGF stimulation. This is SH3KBP1-binding protein 1 (Shkbp1) from Mus musculus (Mouse).